The following is a 915-amino-acid chain: Probable serine/threonine-protein kinase dyrk2 (915 aa).

Composition is skewed to low complexity over residues 51–79 (TSNT…PTIS), 108–119 (SSSKSSSNSSSI), 170–185 (SSSS…STTS), and 196–218 (SSNS…SGSS). Disordered stretches follow at residues 51–119 (TSNT…SSSI), 132–334 (FSSS…SKSS), and 349–533 (AIKS…PTKS). Residues 234–260 (PSHTISDSPRSSTMKSRSVSISNGSLF) show a composition bias toward polar residues. Low complexity-rich tracts occupy residues 261 to 287 (SPTN…SSIS), 300 to 333 (SSST…PSKS), 352 to 364 (SRSL…LARV), 379 to 391 (SSSS…SFSS), 399 to 425 (SSSK…ASKI), and 433 to 533 (SLSS…PTKS). One can recognise a Protein kinase domain in the interval 605 to 902 (FEIVSILGQG…AEQGLKHDWI (298 aa)). ATP-binding positions include 611-619 (LGQGSFCQV) and Lys634. Residue Asp731 is the Proton acceptor of the active site.

This sequence belongs to the protein kinase superfamily. CMGC Ser/Thr protein kinase family. MNB/DYRK subfamily.

The enzyme catalyses L-seryl-[protein] + ATP = O-phospho-L-seryl-[protein] + ADP + H(+). It catalyses the reaction L-threonyl-[protein] + ATP = O-phospho-L-threonyl-[protein] + ADP + H(+). It carries out the reaction L-tyrosyl-[protein] + ATP = O-phospho-L-tyrosyl-[protein] + ADP + H(+). This is Probable serine/threonine-protein kinase dyrk2 (dyrk2) from Dictyostelium discoideum (Social amoeba).